The sequence spans 399 residues: Carbamoyl phosphate synthase small chain (399 aa).

Residues 1–204 (MTKTTLSSDP…WNKGYTINNE (204 aa)) form a CPSase region. The L-glutamine site is built by Ser-60, Gly-256, and Gly-258. The Glutamine amidotransferase type-1 domain occupies 208–396 (HIVAIDYGIK…HDLIVNYREQ (189 aa)). Residue Cys-285 is the Nucleophile of the active site. The L-glutamine site is built by Leu-286, Gln-289, Asn-327, Gly-329, and Phe-330. Catalysis depends on residues His-369 and Glu-371.

The protein belongs to the CarA family. Composed of two chains; the small (or glutamine) chain promotes the hydrolysis of glutamine to ammonia, which is used by the large (or ammonia) chain to synthesize carbamoyl phosphate. Tetramer of heterodimers (alpha,beta)4.

It catalyses the reaction hydrogencarbonate + L-glutamine + 2 ATP + H2O = carbamoyl phosphate + L-glutamate + 2 ADP + phosphate + 2 H(+). It carries out the reaction L-glutamine + H2O = L-glutamate + NH4(+). It functions in the pathway amino-acid biosynthesis; L-arginine biosynthesis; carbamoyl phosphate from bicarbonate: step 1/1. It participates in pyrimidine metabolism; UMP biosynthesis via de novo pathway; (S)-dihydroorotate from bicarbonate: step 1/3. Small subunit of the glutamine-dependent carbamoyl phosphate synthetase (CPSase). CPSase catalyzes the formation of carbamoyl phosphate from the ammonia moiety of glutamine, carbonate, and phosphate donated by ATP, constituting the first step of 2 biosynthetic pathways, one leading to arginine and/or urea and the other to pyrimidine nucleotides. The small subunit (glutamine amidotransferase) binds and cleaves glutamine to supply the large subunit with the substrate ammonia. The sequence is that of Carbamoyl phosphate synthase small chain from Bartonella bacilliformis (strain ATCC 35685 / KC583 / Herrer 020/F12,63).